The chain runs to 284 residues: Tropomyosin, smooth muscle/fibroblast CTM1 (284 aa).

Positions 1 to 284 form a coiled coil; the sequence is MEAIKKKMTM…DVTLQGIGDL (284 aa). The interval 18 to 38 is disordered; it reads AIDRAEQAETDKKSAEDKATG.

This sequence belongs to the tropomyosin family. As to quaternary structure, homodimer. Predominantly expressed in body wall muscle and heart, low in intestine, ovary and larval tail muscle.

In terms of biological role, the function of tropomyosin in smooth muscle and non-muscle cells is not clear. The polypeptide is Tropomyosin, smooth muscle/fibroblast CTM1 (CTM1) (Ciona intestinalis (Transparent sea squirt)).